The following is a 496-amino-acid chain: MRSLLWASLLSGVLAGRALVSPDEFPEDIQLEDLLEGSQQLEDFAYAYPERNRVFGGKAHDDTVNYLYEELKKTGYYDVYKQPQVHLWSNADQTLKVGDEEIEAKTMTYSPSVEVTADVAVVKNLGCSEADYPSDVEGKVALIKRGECPFGDKSVLAAKAKAAASIVYNNVAGSMAGTLGAAQSDKGPYSAIVGISLEDGQKLIKLAEAGSVSVDLWVDSKQENRTTYNVVAQTKGGDPNNVVALGGHTDSVEAGPGINDDGSGIISNLVIAKALTQYSVKNAVRFLFWTAEEFGLLGSNYYVSHLNATELNKIRLYLNFDMIASPNYALMIYDGDGSAFNQSGPAGSAQIEKLFEDYYDSIDLPHIPTQFDGRSDYEAFILNGIPSGGLFTGAEGIMSEENASRWGGQAGVAYDANYHAAGDNMTNLNHEAFLINSKATAFAVATYANDLSSIPKRNTTSSLHRRARTMRPFGKRAPKTHAHVSGSGCWHSQVEA.

An N-terminal signal peptide occupies residues 1–16 (MRSLLWASLLSGVLAG). The PA domain occupies 111-205 (PSVEVTADVA…SLEDGQKLIK (95 aa)). N224 is a glycosylation site (N-linked (GlcNAc...) asparagine). H248 and D260 together coordinate Zn(2+). E292 serves as the catalytic Proton acceptor. Residue E293 participates in Zn(2+) binding. N-linked (GlcNAc...) asparagine glycosylation occurs at N307. D321 is a binding site for Zn(2+). N341 and N402 each carry an N-linked (GlcNAc...) asparagine glycan. Residue H419 coordinates Zn(2+). N424 and N458 each carry an N-linked (GlcNAc...) asparagine glycan. Residues 475 to 496 (KRAPKTHAHVSGSGCWHSQVEA) are disordered.

Belongs to the peptidase M28 family. M28A subfamily. As to quaternary structure, monomer. Requires Zn(2+) as cofactor.

The protein resides in the secreted. Its function is as follows. Extracellular aminopeptidase that releases a wide variety of amino acids from natural peptides. The chain is probable leucine aminopeptidase 2 (lap2) from Aspergillus oryzae (strain ATCC 42149 / RIB 40) (Yellow koji mold).